The following is a 399-amino-acid chain: Bombesin receptor subtype-3 (399 aa).

Residues 1–41 lie on the Extracellular side of the membrane; the sequence is MSQRQPQSPNQTLISITNDTETSSSAVSNDTTPKGWTGDNS. Residues N10, N18, and N29 are each glycosylated (N-linked (GlcNAc...) asparagine). A helical transmembrane segment spans residues 42–63; sequence PGIEALCAIYITYAVIISVGIL. Topologically, residues 64–82 are cytoplasmic; it reads GNAILIKVFFKTKSMQTVP. The helical transmembrane segment at 83-103 threads the bilayer; that stretch reads NIFITSLAFGDLLLLLTCVPV. Residues 104 to 121 are Extracellular-facing; the sequence is DATHYLAEGWLFGKVGCK. Cysteines 120 and 203 form a disulfide. The chain crosses the membrane as a helical span at residues 122–143; that stretch reads VLSFIRLTSVGVSVFTLTILSA. At 144-163 the chain is on the cytoplasmic side; it reads DRYKAVVKPLERQPSNAILK. A helical transmembrane segment spans residues 164–184; sequence TCAKAGGIWIMAMIFALPEAI. Topologically, residues 185-220 are extracellular; it reads FSNVYTFQDPNRNVTFESCNSYPISERLLQEIHSLL. Residues 221-241 form a helical membrane-spanning segment; it reads CFLVFYIIPLSIISVYYSLIA. Residues 242–272 are Cytoplasmic-facing; that stretch reads RTLYKSTLNIPTEEQSHARKQIESRKRIAKT. A helical membrane pass occupies residues 273-293; the sequence is VLVLVALFALCWLPNHLLYLY. The Extracellular segment spans residues 294–313; that stretch reads HSFTYESYAEPSDVPFVVTI. A helical membrane pass occupies residues 314 to 333; it reads FSRVLAFSNSCVNPFALYWL. The Cytoplasmic portion of the chain corresponds to 334–399; that stretch reads SKTFQKHFKA…STAKKGEDKV (66 aa). C347 carries the S-palmitoyl cysteine lipid modification.

The protein belongs to the G-protein coupled receptor 1 family. As to quaternary structure, interacts with C6orf89.

The protein resides in the cell membrane. Its function is as follows. Role in sperm cell division, maturation, or function. This receptor mediates its action by association with G proteins that activate a phosphatidylinositol-calcium second messenger system. The protein is Bombesin receptor subtype-3 (Brs3) of Rattus norvegicus (Rat).